The sequence spans 300 residues: Protoheme IX farnesyltransferase (300 aa).

The next 9 helical transmembrane spans lie at 28 to 48 (VVALMLLTVLVGMCLAMPTIL), 50 to 70 (VQPLIAGLLGIAMMAGSAAAL), 100 to 120 (ALIFAAALGSLGFVILYVFTN), 122 to 142 (LTAWLTFASLIGYALIYTAYL), 149 to 169 (NIVIGGLAGAMPPLLGWTAVT), 176 to 196 (ALLLVIIIFLWTPPHFWALAI), 222 to 242 (CILLYTILLAIACLLPVLVGM), 243 to 263 (SGPLYFVCSSALSCGFIYKAW), and 280 to 300 (FSIYHLMLLFMALLLDHYLWA).

Belongs to the UbiA prenyltransferase family. Protoheme IX farnesyltransferase subfamily.

It is found in the cell inner membrane. It catalyses the reaction heme b + (2E,6E)-farnesyl diphosphate + H2O = Fe(II)-heme o + diphosphate. The protein operates within porphyrin-containing compound metabolism; heme O biosynthesis; heme O from protoheme: step 1/1. Functionally, converts heme B (protoheme IX) to heme O by substitution of the vinyl group on carbon 2 of heme B porphyrin ring with a hydroxyethyl farnesyl side group. This chain is Protoheme IX farnesyltransferase, found in Shewanella oneidensis (strain ATCC 700550 / JCM 31522 / CIP 106686 / LMG 19005 / NCIMB 14063 / MR-1).